The primary structure comprises 91 residues: Acylphosphatase (91 aa).

The Acylphosphatase-like domain occupies 5 to 91 (RLHAIVEGEV…KGEFTSFDTY (87 aa)). Active-site residues include Arg-20 and Asn-38.

This sequence belongs to the acylphosphatase family.

The catalysed reaction is an acyl phosphate + H2O = a carboxylate + phosphate + H(+). The polypeptide is Acylphosphatase (acyP) (Metallosphaera sedula (strain ATCC 51363 / DSM 5348 / JCM 9185 / NBRC 15509 / TH2)).